Consider the following 313-residue polypeptide: Putative S-adenosyl-L-methionine-dependent methyltransferase MAV_4573 (313 aa).

S-adenosyl-L-methionine-binding positions include Asp-129 and 158–159 (DL).

The protein belongs to the UPF0677 family.

Exhibits S-adenosyl-L-methionine-dependent methyltransferase activity. This chain is Putative S-adenosyl-L-methionine-dependent methyltransferase MAV_4573, found in Mycobacterium avium (strain 104).